Here is a 110-residue protein sequence, read N- to C-terminus: Mitochondrial pyruvate carrier 1 (110 aa).

The next 2 membrane-spanning stretches (helical) occupy residues 20-36 (HFWG…AGLV) and 44-61 (MISG…ALFM).

It belongs to the mitochondrial pyruvate carrier (MPC) (TC 2.A.105) family.

It localises to the mitochondrion inner membrane. Mediates the uptake of pyruvate into mitochondria. This Arabidopsis thaliana (Mouse-ear cress) protein is Mitochondrial pyruvate carrier 1.